A 708-amino-acid polypeptide reads, in one-letter code: Ubiquitin thioesterase ZRANB1 (708 aa).

The RanBP2-type 1 zinc-finger motif lies at 3-33 (ERGIKWACEYCTYENWPSAIKCTMCRAQRPS). 4 residues coordinate Zn(2+): cysteine 10, cysteine 13, cysteine 24, and cysteine 27. The interval 38 to 73 (TEDPFKSGSSDVGRDWDPSSTEGGSSPLICPDSSAR) is disordered. 2 RanBP2-type zinc fingers span residues 84 to 113 (NANK…QRRT) and 149 to 178 (RTQH…PRPN). Residues cysteine 90, cysteine 93, cysteine 104, cysteine 107, cysteine 155, cysteine 158, cysteine 169, and cysteine 172 each coordinate Zn(2+). The tract at residues 200–223 (RARWRGSCSSGNSQRRSPPTMKRD) is disordered. Residues 206-216 (SCSSGNSQRRS) show a composition bias toward polar residues. 2 ANK repeats span residues 260–290 (KKTD…SGGD) and 313–340 (YTLV…QQAA). The region spanning 432-592 (LYALWNRTAG…RGHFSALVAM (161 aa)) is the OTU domain. Cysteine 443 serves as the catalytic Nucleophile. The active-site Proton acceptor is histidine 585.

The protein belongs to the peptidase C64 family. In terms of assembly, interacts with TRAF6. Interacts with APC.

Its subcellular location is the cytoplasm. The protein resides in the nucleus. It catalyses the reaction Thiol-dependent hydrolysis of ester, thioester, amide, peptide and isopeptide bonds formed by the C-terminal Gly of ubiquitin (a 76-residue protein attached to proteins as an intracellular targeting signal).. Its function is as follows. Ubiquitin thioesterase, which specifically hydrolyzes 'Lys-29'-linked and 'Lys-33'-linked diubiquitin. Also cleaves 'Lys-63'-linked chains, but with 40-fold less efficiency compared to 'Lys-29'-linked ones. Positive regulator of the Wnt signaling pathway that deubiquitinates APC protein, a negative regulator of Wnt-mediated transcription. Acts as a regulator of autophagy by mediating deubiquitination of PIK3C3/VPS34, thereby promoting autophagosome maturation. Plays a role in the regulation of cell morphology and cytoskeletal organization. Required in the stress fiber dynamics and cell migration. In Bos taurus (Bovine), this protein is Ubiquitin thioesterase ZRANB1.